The primary structure comprises 702 residues: Translation factor GUF1 homolog, chloroplastic (702 aa).

The segment covering 1-30 (MASAAPASRGAARASTAARDAPFAAAARGP) has biased composition (low complexity). Positions 1–41 (MASAAPASRGAARASTAARDAPFAAAARGPGRFRRDGNGRN) are disordered. The 197-residue stretch at 87–283 (SQIRNFSIIA…NIVKMIPPPP (197 aa)) folds into the tr-type G domain. GTP contacts are provided by residues 96 to 103 (AHIDHGKS), 162 to 166 (DTPGH), and 216 to 219 (NKID).

This sequence belongs to the TRAFAC class translation factor GTPase superfamily. Classic translation factor GTPase family. LepA subfamily.

The protein localises to the plastid. Its subcellular location is the chloroplast. The enzyme catalyses GTP + H2O = GDP + phosphate + H(+). In terms of biological role, promotes chloroplast protein synthesis. May act as a fidelity factor of the translation reaction, by catalyzing a one-codon backward translocation of tRNAs on improperly translocated ribosomes. The polypeptide is Translation factor GUF1 homolog, chloroplastic (Micromonas pusilla (strain CCMP1545) (Picoplanktonic green alga)).